The following is a 569-amino-acid chain: MKNINNGFFLCMLLLLWCFVHSGISIDPFSPSDSLKTECVMKPPRSSETKGLLQFSRSVEDDSDEEWKIDGSGSIREMTQRIQLHEGNIYSFSAWVKLREGNNKKVGVVFRTENGRFVHGGEVRAKKRCWTLLKGGIVPDVSGSVDIFFESDDKEAKISASDVSLKQFSKQEWKLKQDQLIEKIRKSKVRFEVTYQNKTAVKGAVISIEQTKPSFLLGCAMNFRILQSEGYRNWFASRFKITSFTNEMKWYTTEKERGHENYTAADSMLKFAEENGILVRGHTVLWDDPLMQPTWVPKIEDPNDLMNVTLNRINSVMTRYKGKLTGWDVVNENVHWDYFEKMLGANASSSFYNLAFKLDPDVTMFVNEYNTIENRVEVTATPVKVKEKMEEILAYPGNMNIKGAIGAQGHFRPTQPNLAYMRSALDTLGSLGLPIWLTEVDMPKCPNQEVYIEEILREAYSHPAVKGIIIFAGPEVSGFDKLTLADKYFNNTATGDVIDKLLKEWQQSSEIPKIFMTDSENDEEEVSLLHGHYNVNVSHPWMKNMSTSFSLEVTKEMGQRQVVRVVINA.

Positions 1 to 25 (MKNINNGFFLCMLLLLWCFVHSGIS) are cleaved as a signal peptide. N197, N261, and N307 each carry an N-linked (GlcNAc...) asparagine glycan. Residues 209-500 (EQTKPSFLLG…NTATGDVIDK (292 aa)) form the GH10 domain. The Proton donor role is filled by E332. N-linked (GlcNAc...) asparagine glycosylation occurs at N346. Residue E439 is the Nucleophile of the active site. N-linked (GlcNAc...) asparagine glycosylation is found at N490, N536, and N544.

The protein belongs to the glycosyl hydrolase 10 (cellulase F) family.

The catalysed reaction is Endohydrolysis of (1-&gt;4)-beta-D-xylosidic linkages in xylans.. It participates in glycan degradation; xylan degradation. Functionally, binds to and hydrolyzes insoluble and soluble xylan substrates. This is Endo-1,4-beta-xylanase 5 from Arabidopsis thaliana (Mouse-ear cress).